A 650-amino-acid chain; its full sequence is 1-deoxy-D-xylulose-5-phosphate synthase (650 aa).

Positions M1–H13 are enriched in basic and acidic residues. The interval M1–L23 is disordered. Thiamine diphosphate is bound by residues H92 and A133–S135. D164 contacts Mg(2+). Residues G165–A166, N193, Y302, and E384 contribute to the thiamine diphosphate site. N193 is a Mg(2+) binding site.

This sequence belongs to the transketolase family. DXPS subfamily. As to quaternary structure, homodimer. Mg(2+) is required as a cofactor. The cofactor is thiamine diphosphate.

The catalysed reaction is D-glyceraldehyde 3-phosphate + pyruvate + H(+) = 1-deoxy-D-xylulose 5-phosphate + CO2. Its pathway is metabolic intermediate biosynthesis; 1-deoxy-D-xylulose 5-phosphate biosynthesis; 1-deoxy-D-xylulose 5-phosphate from D-glyceraldehyde 3-phosphate and pyruvate: step 1/1. Its function is as follows. Catalyzes the acyloin condensation reaction between C atoms 2 and 3 of pyruvate and glyceraldehyde 3-phosphate to yield 1-deoxy-D-xylulose-5-phosphate (DXP). This Chelativorans sp. (strain BNC1) protein is 1-deoxy-D-xylulose-5-phosphate synthase.